Here is a 341-residue protein sequence, read N- to C-terminus: ATPase GET3 (341 aa).

34 to 41 (KGGVGKTT) is a binding site for ATP. The active site involves aspartate 63. Glutamate 245 and asparagine 272 together coordinate ATP. Zn(2+)-binding residues include cysteine 283 and cysteine 286.

Belongs to the arsA ATPase family. In terms of assembly, homodimer.

It localises to the cytoplasm. The protein resides in the endoplasmic reticulum. In terms of biological role, ATPase required for the post-translational delivery of tail-anchored (TA) proteins to the endoplasmic reticulum. Recognizes and selectively binds the transmembrane domain of TA proteins in the cytosol. This complex then targets to the endoplasmic reticulum by membrane-bound receptors, where the tail-anchored protein is released for insertion. This process is regulated by ATP binding and hydrolysis. ATP binding drives the homodimer towards the closed dimer state, facilitating recognition of newly synthesized TA membrane proteins. ATP hydrolysis is required for insertion. Subsequently, the homodimer reverts towards the open dimer state, lowering its affinity for the membrane-bound receptor, and returning it to the cytosol to initiate a new round of targeting. The polypeptide is ATPase GET3 (Ajellomyces capsulatus (strain H143) (Darling's disease fungus)).